The chain runs to 372 residues: NAD(P)H-quinone oxidoreductase subunit 1 (372 aa).

The next 8 membrane-spanning stretches (helical) occupy residues Ala-27 to Val-47, Trp-97 to Val-117, Val-128 to Met-148, Ala-166 to Met-186, Ile-204 to Leu-224, Tyr-249 to Ser-269, Ser-308 to Leu-328, and Val-351 to Gly-371.

The protein belongs to the complex I subunit 1 family. NDH-1 is composed of at least 11 different subunits.

The protein localises to the cellular thylakoid membrane. It catalyses the reaction a plastoquinone + NADH + (n+1) H(+)(in) = a plastoquinol + NAD(+) + n H(+)(out). The enzyme catalyses a plastoquinone + NADPH + (n+1) H(+)(in) = a plastoquinol + NADP(+) + n H(+)(out). Functionally, NDH-1 shuttles electrons from an unknown electron donor, via FMN and iron-sulfur (Fe-S) centers, to quinones in the respiratory and/or the photosynthetic chain. The immediate electron acceptor for the enzyme in this species is believed to be plastoquinone. Couples the redox reaction to proton translocation, and thus conserves the redox energy in a proton gradient. The protein is NAD(P)H-quinone oxidoreductase subunit 1 of Nostoc punctiforme (strain ATCC 29133 / PCC 73102).